The sequence spans 451 residues: Serine/threonine-protein kinase VRK3 (451 aa).

Disordered regions lie at residues 28–61 (KHEG…SKKV) and 74–125 (LPSE…MTAS). Positions 32-45 (SQSFVKPFTSSSQG) are enriched in polar residues. A Nuclear localization signal motif is present at residues 47-62 (RRKTNTSSETSSKKVK). A phosphoserine mark is found at S53, S57, S80, S81, S88, and S106. A compositionally biased stretch (polar residues) spans 78-91 (GKSSGSEDTLSTSG). Over residues 98 to 116 (SRSPTPRSSPQTTRQSPQT) the composition is skewed to low complexity. Residues 123 to 434 (TASLEALPVG…TLRNELEALL (312 aa)) form the Protein kinase domain.

This sequence belongs to the protein kinase superfamily. CK1 Ser/Thr protein kinase family. VRK subfamily. Interacts with DUSP3. Interacts with RAN. Interacts with HSP70/HSPA1A. Post-translationally, phosphorylated at Ser-106 by CDK5; leading to protection of the cell against H2O2-induced apoptosis. Ubiquitinated by RNF144A.

It is found in the nucleus. It localises to the cytoplasm. The catalysed reaction is L-seryl-[protein] + ATP = O-phospho-L-seryl-[protein] + ADP + H(+). Plays a role in the regulation of the cell cycle by phosphorylating the nuclear envelope protein barrier-to-autointegration factor/BAF that is required for disassembly and reassembly, respectively, of the nuclear envelope during mitosis. Under normal physiological conditions, negatively regulates ERK activity along with VHR phosphatase in the nucleus, causing timely and transient action of ERK. Stress conditions activate CDK5 which phosphorylates VRK3 to increase VHR phosphatase activity and suppress prolonged ERK activation that causes cell death. For example, upon glutamate induction, promotes nuclear localization of HSP70/HSPA1A to inhibit ERK activation via VHR phosphatase. In Bos taurus (Bovine), this protein is Serine/threonine-protein kinase VRK3 (VRK3).